Reading from the N-terminus, the 252-residue chain is Probable NADP-dependent dehydrogenase HI_1430 (252 aa).

NADP(+) is bound at residue 7–31 (LVTGATAGFGLAICKKLIEAGYKVI). Substrate is bound at residue Ser-137. Residue Tyr-150 is the Proton acceptor of the active site.

Belongs to the short-chain dehydrogenases/reductases (SDR) family.

This Haemophilus influenzae (strain ATCC 51907 / DSM 11121 / KW20 / Rd) protein is Probable NADP-dependent dehydrogenase HI_1430.